A 99-amino-acid chain; its full sequence is Nucleoid-associated protein UPA3_0088 (99 aa).

The protein belongs to the YbaB/EbfC family. Homodimer.

Its subcellular location is the cytoplasm. The protein resides in the nucleoid. Its function is as follows. Binds to DNA and alters its conformation. May be involved in regulation of gene expression, nucleoid organization and DNA protection. This Ureaplasma parvum serovar 3 (strain ATCC 27815 / 27 / NCTC 11736) protein is Nucleoid-associated protein UPA3_0088.